Here is a 267-residue protein sequence, read N- to C-terminus: U6 snRNA phosphodiesterase 1 (267 aa).

The tract at residues 1–72 (MNAAPLVGYS…EDDSARHGGR (72 aa)) is disordered. His122 (proton acceptor) is an active-site residue. 122–124 (HLS) contacts AMP. UMP is bound by residues Gln166, Tyr204, and 208–212 (SFHVS). Residues Tyr204 and 206–212 (DPSFHVS) each bind AMP. His210 serves as the catalytic Proton donor.

It belongs to the 2H phosphoesterase superfamily. USB1 family. In terms of assembly, interacts with PLRG1, CDC5L and PRPF19.

It localises to the nucleus. The enzyme catalyses a 3'-end uridylyl-uridine-RNA = a 3'-end 2',3'-cyclophospho-uridine-RNA + uridine. It carries out the reaction a 3'-end uridylyl-adenosine-RNA = a 3'-end 2',3'-cyclophospho-uridine-RNA + adenosine. Functionally, 3'-5' RNA exonuclease that trims the 3' end of oligo(U) and oligo(A) tracts of the pre-U6 small nuclear RNA (snRNA) molecule, leading to the formation of a mature U6 snRNA 3' end-terminated with a 2',3'-cyclic phosphate. Participates in the U6 snRNA 3' end processing that prevents U6 snRNA degradation. In addition also removes uridines from the 3' end of U6atac snRNA and possibly the vault RNA VTRNA1-1. The sequence is that of U6 snRNA phosphodiesterase 1 from Rattus norvegicus (Rat).